The primary structure comprises 269 residues: 3-methyl-2-oxobutanoate hydroxymethyltransferase (269 aa).

Mg(2+) contacts are provided by Asp-48 and Asp-87. Residues 48–49 (DS), Asp-87, and Lys-116 contribute to the 3-methyl-2-oxobutanoate site. Glu-118 contributes to the Mg(2+) binding site. Glu-185 acts as the Proton acceptor in catalysis.

This sequence belongs to the PanB family. As to quaternary structure, homodecamer; pentamer of dimers. Mg(2+) is required as a cofactor.

It localises to the cytoplasm. It carries out the reaction 3-methyl-2-oxobutanoate + (6R)-5,10-methylene-5,6,7,8-tetrahydrofolate + H2O = 2-dehydropantoate + (6S)-5,6,7,8-tetrahydrofolate. It functions in the pathway cofactor biosynthesis; (R)-pantothenate biosynthesis; (R)-pantoate from 3-methyl-2-oxobutanoate: step 1/2. In terms of biological role, catalyzes the reversible reaction in which hydroxymethyl group from 5,10-methylenetetrahydrofolate is transferred onto alpha-ketoisovalerate to form ketopantoate. The chain is 3-methyl-2-oxobutanoate hydroxymethyltransferase from Campylobacter curvus (strain 525.92).